We begin with the raw amino-acid sequence, 334 residues long: H-2 class I histocompatibility antigen, Q7 alpha chain (334 aa).

Positions 1 to 21 (MALTMLLLLVAAALTLIETRA) are cleaved as a signal peptide. The tract at residues 22 to 111 (GQHSLQYFHT…AQSYYNQSKG (90 aa)) is alpha-1. The Extracellular segment spans residues 22–310 (GQHSLQYFHT…PPYTVSNMAT (289 aa)). Asn107 carries an N-linked (GlcNAc...) asparagine glycan. Residues 112–203 (GSHTLQWMYG…QLGKETLLRT (92 aa)) form an alpha-2 region. Intrachain disulfides connect Cys122–Cys185 and Cys224–Cys280. An alpha-3 region spans residues 204-295 (DPPKAHVTHH…GLPEPLTLRW (92 aa)). Residues 206–294 (PKAHVTHHPR…EGLPEPLTLR (89 aa)) form the Ig-like C1-type domain. Asn277 carries an N-linked (GlcNAc...) asparagine glycan. Positions 296 to 310 (GRWEPPPYTVSNMAT) are connecting peptide. The helical transmembrane segment at 311-332 (IAVVVDLGAVAIIGAVVAFVMN) threads the bilayer.

It belongs to the MHC class I family. Heterodimer of an alpha chain and a beta chain (beta-2-microglobulin).

The protein localises to the membrane. Functionally, involved in the presentation of foreign antigens to the immune system. This Mus musculus (Mouse) protein is H-2 class I histocompatibility antigen, Q7 alpha chain (H2-Q7).